We begin with the raw amino-acid sequence, 555 residues long: Disabled homolog 1 (555 aa).

The disordered stretch occupies residues 1–26; sequence MSTETELQVAVKTSAKKDSRKKGQDR. Over residues 15–26 the composition is skewed to basic and acidic residues; sequence AKKDSRKKGQDR. Residues 36-189 enclose the PID domain; sequence KGEGVRYKAK…CEQAVYQTIL (154 aa). 3 positions are modified to phosphotyrosine: Tyr198, Tyr220, and Tyr232. Disordered stretches follow at residues 384–410, 418–437, and 468–555; these read LTPL…RQKM, FQMA…PSLT, and NLTP…QAGS. Residues 391 to 403 show a composition bias toward polar residues; it reads PGTSDSTRPSPQT. Composition is skewed to low complexity over residues 470–479 and 487–501; these read TPVTSTTPST and PRQS…SHAS. Phosphoserine; by CDK5 is present on Ser491. Positions 504-513 are enriched in acidic residues; it reads TTDDIFEEGF.

Associates with the SH2 domains of SRC, FYN and ABL. Interacts (phosphorylated on tyrosine residues) with CRK and CRKL (via respective SH2 domain). Interacts with DAB2IP, SIAH1, LRP8 and VLDLR. Interacts with LRP1. Interacts with APLP1 (via NPXY motif). Interacts with DAB2IP. Interacts with ZSWIM8. Post-translationally, phosphorylated by FYN on Tyr-198 and Tyr-220 upon reelin induction in embryonic neurons. Also phosphorylated on Ser-491 independently of reelin signaling. Ubiquitinated by various cullin-5-RING E3 ubiquitin-protein ligase complexes (ECS complexes) following ligand-binding and phosphorylation, leading to its degradation. Ubiquitinated by the ECS(SOCS7) complex in the cortical plate of the developing cerebral cortex following ligand-binding and phosphorylation by FYN, leading to its degradation by the proteasome. Recognized by ZSWIM8 through a disorder targets misorder mechanism that eliminates misfolded DAB1 via ubiquitination and proteasomal degradation.

The protein localises to the cytoplasm. In terms of biological role, signaling adapter of the reelin-mediated signaling pathway, which regulates the migration and differentiation of postmitotic neurons during brain development. Mediates intracellular transduction of Reelin signaling following reelin (RELN)-binding to its receptor: acts by docking proteins through its phosphotyrosine residues and PID domain. The polypeptide is Disabled homolog 1 (DAB1) (Macaca fascicularis (Crab-eating macaque)).